We begin with the raw amino-acid sequence, 2290 residues long: Protein Ycf2 (2290 aa).

Residue Gly-1638 to Ser-1645 coordinates ATP.

This sequence belongs to the Ycf2 family.

It localises to the plastid. Its subcellular location is the chloroplast stroma. In terms of biological role, probable ATPase of unknown function. Its presence in a non-photosynthetic plant (Epifagus virginiana) and experiments in tobacco indicate that it has an essential function which is probably not related to photosynthesis. This Phalaenopsis aphrodite subsp. formosana (Moth orchid) protein is Protein Ycf2.